The following is a 377-amino-acid chain: DNA replication and repair protein RecF (377 aa).

Residue 30–37 participates in ATP binding; that stretch reads GLNGSGKT.

This sequence belongs to the RecF family.

Its subcellular location is the cytoplasm. Its function is as follows. The RecF protein is involved in DNA metabolism; it is required for DNA replication and normal SOS inducibility. RecF binds preferentially to single-stranded, linear DNA. It also seems to bind ATP. The chain is DNA replication and repair protein RecF from Cytophaga hutchinsonii (strain ATCC 33406 / DSM 1761 / CIP 103989 / NBRC 15051 / NCIMB 9469 / D465).